The chain runs to 289 residues: 4-hydroxy-tetrahydrodipicolinate synthase (289 aa).

Threonine 42 is a pyruvate binding site. Residue tyrosine 129 is the Proton donor/acceptor of the active site. The active-site Schiff-base intermediate with substrate is the lysine 157. Isoleucine 198 contributes to the pyruvate binding site.

The protein belongs to the DapA family. Homotetramer; dimer of dimers.

It localises to the cytoplasm. The catalysed reaction is L-aspartate 4-semialdehyde + pyruvate = (2S,4S)-4-hydroxy-2,3,4,5-tetrahydrodipicolinate + H2O + H(+). The protein operates within amino-acid biosynthesis; L-lysine biosynthesis via DAP pathway; (S)-tetrahydrodipicolinate from L-aspartate: step 3/4. In terms of biological role, catalyzes the condensation of (S)-aspartate-beta-semialdehyde [(S)-ASA] and pyruvate to 4-hydroxy-tetrahydrodipicolinate (HTPA). The polypeptide is 4-hydroxy-tetrahydrodipicolinate synthase (Chlamydia caviae (strain ATCC VR-813 / DSM 19441 / 03DC25 / GPIC) (Chlamydophila caviae)).